A 609-amino-acid chain; its full sequence is Membrane-bound O-acyltransferase GUP2 (609 aa).

A signal peptide spans 1–18 (MSMLRIWSCIVHFFSVQA). Residues 19–75 (LDSRIKPDIEFKRRQRIFINSSKEENGSSSSAVTVTRNPVLSSNSPSPPLWNTWEFR) lie on the Lumenal side of the membrane. The chain crosses the membrane as a helical span at residues 76–96 (LYYLAFTVVVPFMIKAALATS). The Cytoplasmic portion of the chain corresponds to 97-133 (SESNPNYYKFSGLLAHGWILGRKVDNSDPQYRFFRSN). A helical transmembrane segment spans residues 134–154 (FFLLAILILLQIILKKVFVKF). Residues 155 to 169 (SKIPKTKFDFACGLV) lie on the Lumenal side of the membrane. A helical transmembrane segment spans residues 170–190 (FVCFMYGINSVKLFTHAFIFF). Topologically, residues 191-200 (TLAHSLKRKR) are cytoplasmic. The chain crosses the membrane as a helical span at residues 201-221 (LIAAFAIWSYGIFTLFINQKM). Residues 222–324 (KNLPFNNIAI…VAEHHIQDYN (103 aa)) are Lumenal-facing. A helical transmembrane segment spans residues 325–345 (FINFIAYITYAPLFLVGPIIT). The Cytoplasmic segment spans residues 346 to 371 (FNDYLYQSENKLPSLTKKNIGFYALK). Residues 372-392 (VFSSLLLMEIILHYIYVGAIA) form a helical membrane-spanning segment. At 393 to 406 (RTKAWNNDTPLQQA) the chain is on the lumenal side. The chain crosses the membrane as a helical span at residues 407 to 427 (MIALFNLNIMYLKLLIPWRLF). The Cytoplasmic segment spans residues 428–474 (RLWAMVDGIDAPENMLRCVDNNYSTVGFWRAWHTSFNKWVIRYIYVP). A helical membrane pass occupies residues 475–495 (FGGSNNKILTSFAVFSFVAIW). Residue His-496 is part of the active site. Over 496–502 (HDIQLRV) the chain is Lumenal. Residues 503-523 (LFWGWLTVLLLLGETYITNCF) traverse the membrane as a helical segment. The Cytoplasmic segment spans residues 524–533 (SRYRFRSWYR). Residues 534 to 554 (FVCGIGAAINICMMMIINVYG) traverse the membrane as a helical segment. Residues 555–575 (FCLGAEGTKLLLKGIFNNSHS) are Lumenal-facing. Residues 576–596 (PEFLTAVMVSLFIAVQVMFEI) traverse the membrane as a helical segment. The Cytoplasmic segment spans residues 597–609 (REEEKRHGINLKC).

Belongs to the membrane-bound acyltransferase family.

It localises to the endoplasmic reticulum membrane. Functionally, probable membrane-bound O-acyltransferase. Together with GUP1, has an influence on the chemical composition of the yeast extracellular matrix (yECM) in yeast multicellular aggregates, such as biofilms and colonies. The sequence is that of Membrane-bound O-acyltransferase GUP2 (GUP2) from Saccharomyces cerevisiae (strain ATCC 204508 / S288c) (Baker's yeast).